A 1072-amino-acid polypeptide reads, in one-letter code: Carbamoyl phosphate synthase large chain (1072 aa).

The interval 1–401 (MPKRLDINTI…SLLKAVRSLE (401 aa)) is carboxyphosphate synthetic domain. ATP contacts are provided by R129, R169, G175, G176, K208, I210, E215, G241, V242, H243, Q284, and E298. The region spanning 133-327 (RTLMQELNEP…IAKLAAKIAV (195 aa)) is the ATP-grasp 1 domain. Positions 284, 298, and 300 each coordinate Mg(2+). 3 residues coordinate Mn(2+): Q284, E298, and N300. Positions 402-546 (LGIYHLELNH…YSTYGDENES (145 aa)) are oligomerization domain. Residues 547-929 (IVTERKSVMV…ALYKGLVAAG (383 aa)) are carbamoyl phosphate synthetic domain. An ATP-grasp 2 domain is found at 671 to 861 (EAALTELGIP…MANIATKVIL (191 aa)). ATP contacts are provided by R707, R746, E752, G777, V778, H779, S780, Q820, and E832. Residues Q820, E832, and N834 each contribute to the Mg(2+) site. 3 residues coordinate Mn(2+): Q820, E832, and N834. The MGS-like domain occupies 930 to 1072 (ISIPTHGSVI…PTTRHEVVHA (143 aa)). An allosteric domain region spans residues 930–1072 (ISIPTHGSVI…PTTRHEVVHA (143 aa)).

The protein belongs to the CarB family. As to quaternary structure, composed of two chains; the small (or glutamine) chain promotes the hydrolysis of glutamine to ammonia, which is used by the large (or ammonia) chain to synthesize carbamoyl phosphate. Tetramer of heterodimers (alpha,beta)4. The cofactor is Mg(2+). Mn(2+) is required as a cofactor.

The enzyme catalyses hydrogencarbonate + L-glutamine + 2 ATP + H2O = carbamoyl phosphate + L-glutamate + 2 ADP + phosphate + 2 H(+). The catalysed reaction is hydrogencarbonate + NH4(+) + 2 ATP = carbamoyl phosphate + 2 ADP + phosphate + 2 H(+). Its pathway is amino-acid biosynthesis; L-arginine biosynthesis; carbamoyl phosphate from bicarbonate: step 1/1. It functions in the pathway pyrimidine metabolism; UMP biosynthesis via de novo pathway; (S)-dihydroorotate from bicarbonate: step 1/3. Its function is as follows. Large subunit of the glutamine-dependent carbamoyl phosphate synthetase (CPSase). CPSase catalyzes the formation of carbamoyl phosphate from the ammonia moiety of glutamine, carbonate, and phosphate donated by ATP, constituting the first step of 2 biosynthetic pathways, one leading to arginine and/or urea and the other to pyrimidine nucleotides. The large subunit (synthetase) binds the substrates ammonia (free or transferred from glutamine from the small subunit), hydrogencarbonate and ATP and carries out an ATP-coupled ligase reaction, activating hydrogencarbonate by forming carboxy phosphate which reacts with ammonia to form carbamoyl phosphate. The protein is Carbamoyl phosphate synthase large chain of Bacillus cytotoxicus (strain DSM 22905 / CIP 110041 / 391-98 / NVH 391-98).